The chain runs to 272 residues: Cerberus (272 aa).

The N-terminal stretch at 1–17 is a signal peptide; that stretch reads MHLLLVQLLVLLPLGKA. Disulfide bonds link Cys162–Cys209, Cys176–Cys223, Cys186–Cys239, and Cys190–Cys241. The CTCK domain occupies 162–246; sequence CRTVPFNQTI…EECQCMVKTE (85 aa). 2 N-linked (GlcNAc...) asparagine glycosylation sites follow: Asn168 and Asn222.

The protein belongs to the DAN family. In terms of assembly, forms monomers and predominantly dimers. N-glycosylated.

It is found in the secreted. Cytokine that may play a role in anterior neural induction and somite formation during embryogenesis in part, through a BMP-inhibitory mechanism. Can regulate Nodal signaling during gastrulation as well as the formation and patterning of the primitive streak. The chain is Cerberus (Cer1) from Mus musculus (Mouse).